The following is a 91-amino-acid chain: Auxin-responsive protein SAUR20 (91 aa).

It belongs to the ARG7 family.

The protein resides in the cell membrane. Its function is as follows. Functions as a positive effector of cell expansion through modulation of auxin transport. This is Auxin-responsive protein SAUR20 from Arabidopsis thaliana (Mouse-ear cress).